The chain runs to 408 residues: F-box A protein 155 (408 aa).

Positions 1–22 are disordered; that stretch reads MSDRGSDQSSSSSDSAQHIPPK.

This sequence belongs to the FTH family.

The protein is F-box A protein 155 (fbxa-155) of Caenorhabditis elegans.